We begin with the raw amino-acid sequence, 155 residues long: Ribonuclease H (155 aa).

Residues 1-143 (MNQVEIYTDG…ADALANRGVD (143 aa)) enclose the RNase H type-1 domain. Mg(2+)-binding residues include Asp9, Glu47, Asp69, and Asp135.

The protein belongs to the RNase H family. As to quaternary structure, monomer. Mg(2+) is required as a cofactor.

Its subcellular location is the cytoplasm. The catalysed reaction is Endonucleolytic cleavage to 5'-phosphomonoester.. Endonuclease that specifically degrades the RNA of RNA-DNA hybrids. The polypeptide is Ribonuclease H (Verminephrobacter eiseniae (strain EF01-2)).